A 473-amino-acid polypeptide reads, in one-letter code: Photosystem II CP43 reaction center protein (473 aa).

The propeptide occupies 1–14; sequence MKTLYSLRRFYHVE. At T15 the chain carries N-acetylthreonine. At T15 the chain carries Phosphothreonine. 5 consecutive transmembrane segments (helical) span residues 69–93, 134–155, 178–200, 255–275, and 291–312; these read LFEV…PHLA, LLGP…KDRN, KALY…RKIT, KPFA…LSYS, and WFNN…ASQA. Position 367 (E367) interacts with [CaMn4O5] cluster. The chain crosses the membrane as a helical span at residues 447–471; sequence RARAAAAGFEKGIDRDFEPVLFMTP.

It belongs to the PsbB/PsbC family. PsbC subfamily. PSII is composed of 1 copy each of membrane proteins PsbA, PsbB, PsbC, PsbD, PsbE, PsbF, PsbH, PsbI, PsbJ, PsbK, PsbL, PsbM, PsbT, PsbX, PsbY, PsbZ, Psb30/Ycf12, at least 3 peripheral proteins of the oxygen-evolving complex and a large number of cofactors. It forms dimeric complexes. It depends on Binds multiple chlorophylls and provides some of the ligands for the Ca-4Mn-5O cluster of the oxygen-evolving complex. It may also provide a ligand for a Cl- that is required for oxygen evolution. PSII binds additional chlorophylls, carotenoids and specific lipids. as a cofactor.

It is found in the plastid. The protein resides in the chloroplast thylakoid membrane. One of the components of the core complex of photosystem II (PSII). It binds chlorophyll and helps catalyze the primary light-induced photochemical processes of PSII. PSII is a light-driven water:plastoquinone oxidoreductase, using light energy to abstract electrons from H(2)O, generating O(2) and a proton gradient subsequently used for ATP formation. The sequence is that of Photosystem II CP43 reaction center protein from Solanum tuberosum (Potato).